The sequence spans 276 residues: MQIHTTIQSLRAARAAVSGKVALVPTMGNLHDGHIALMRQATGHADSIVASIFVNRLQFGPRDDFDRYPRTFKADCERLEAAGVAHVFAPDEGEMYPQPQQYHVDPAPAHVTILEGEFRPDHFRGVATVVLKLLNIVRPDVALFGKKDYQQLMVLTNMVRELAVAVEVVPGETIRATDGLALSSRNGYLSAEERVEAPRLYRELARVRDAVRDGDRDFLKLETEAVAGLAAHGWHPDYIAVRRRADLQPPGDANDPLVVLAAAKLGHTRLIDNLEI.

Residue 27-34 (MGNLHDGH) participates in ATP binding. His-34 functions as the Proton donor in the catalytic mechanism. Position 58 (Gln-58) interacts with (R)-pantoate. Gln-58 provides a ligand contact to beta-alanine. 145–148 (GKKD) contacts ATP. Gln-151 lines the (R)-pantoate pocket. ATP-binding positions include Ile-174 and 182 to 185 (LSSR).

It belongs to the pantothenate synthetase family. As to quaternary structure, homodimer.

The protein localises to the cytoplasm. It carries out the reaction (R)-pantoate + beta-alanine + ATP = (R)-pantothenate + AMP + diphosphate + H(+). The protein operates within cofactor biosynthesis; (R)-pantothenate biosynthesis; (R)-pantothenate from (R)-pantoate and beta-alanine: step 1/1. Its function is as follows. Catalyzes the condensation of pantoate with beta-alanine in an ATP-dependent reaction via a pantoyl-adenylate intermediate. The sequence is that of Pantothenate synthetase from Aromatoleum aromaticum (strain DSM 19018 / LMG 30748 / EbN1) (Azoarcus sp. (strain EbN1)).